We begin with the raw amino-acid sequence, 221 residues long: uncharacterized protein (221 aa).

Transmembrane regions (helical) follow at residues 30–50 (FGIFLALSIEFIPAEVVLPLA), 62–82 (AGVVLAGSLGGVAGPLTLYWI), 144–164 (VWVFSLYTFIAMLPITFVYVY), and 179–199 (ILDQYMLPIGIAILALFLLYL).

Belongs to the DedA family.

The protein localises to the cell membrane. This is an uncharacterized protein from Bacillus subtilis (strain 168).